Here is a 492-residue protein sequence, read N- to C-terminus: Glycylpeptide N-tetradecanoyltransferase 2 (492 aa).

Residues 1-77 (MAEDSESAAS…SASDSQEIKN (77 aa)) form a disordered region. Positions 15–32 (ELDDQDTCGIDGDNEEEN) are enriched in acidic residues. A compositionally biased stretch (basic residues) spans 46–57 (KKKKKKQKRKKE). Residues 61–72 (SGGTKSDSASDS) show a composition bias toward polar residues. Histidine 111, tryptophan 116, leucine 244, valine 246, serine 252, arginine 254, valine 255, and alanine 256 together coordinate tetradecanoyl-CoA.

It belongs to the NMT family.

The protein localises to the cytoplasm. Its subcellular location is the membrane. It carries out the reaction N-terminal glycyl-[protein] + tetradecanoyl-CoA = N-tetradecanoylglycyl-[protein] + CoA + H(+). It catalyses the reaction N-terminal glycyl-L-lysyl-[protein] + tetradecanoyl-CoA = N-terminal glycyl-(N(6)-tetradecanoyl)-L-lysyl-[protein] + CoA + H(+). In terms of biological role, adds a myristoyl group to the N-terminal glycine residue of certain cellular and viral proteins. Also able to mediate N-terminal lysine myristoylation of proteins. The sequence is that of Glycylpeptide N-tetradecanoyltransferase 2 from Danio rerio (Zebrafish).